The chain runs to 257 residues: MLPSDLVKYKEQSQKIIALTAWDSISGSIAEQANVDLVLVGDSLAMVCLGYKSTLPLTLENIIYHTNAVSRGFKKKIEEQPLLVTDMPFLTYQCGEDKAVEYAGKIIQSTYAKAVKVEGAEPEIQKVISRLIRMGIPVMGHIGLTPQSYLNLGLKKQGESLESQEKIKKDASILEKLGCFSIVLEHMPELLAKEIQNNLTIPTIGIGAGNFCDGQVRVTADLLGLNDDQPPFCQPIIQGKHLFKDKLKEWVDSERLN.

Asp42 and Asp86 together coordinate Mg(2+). 3-methyl-2-oxobutanoate is bound by residues 42–43 (DS), Asp86, and Lys116. Glu118 contacts Mg(2+). Glu185 functions as the Proton acceptor in the catalytic mechanism.

It belongs to the PanB family. As to quaternary structure, homodecamer; pentamer of dimers. Requires Mg(2+) as cofactor.

The protein localises to the cytoplasm. The catalysed reaction is 3-methyl-2-oxobutanoate + (6R)-5,10-methylene-5,6,7,8-tetrahydrofolate + H2O = 2-dehydropantoate + (6S)-5,6,7,8-tetrahydrofolate. The protein operates within cofactor biosynthesis; (R)-pantothenate biosynthesis; (R)-pantoate from 3-methyl-2-oxobutanoate: step 1/2. Its function is as follows. Catalyzes the reversible reaction in which hydroxymethyl group from 5,10-methylenetetrahydrofolate is transferred onto alpha-ketoisovalerate to form ketopantoate. This Prochlorococcus marinus (strain MIT 9312) protein is 3-methyl-2-oxobutanoate hydroxymethyltransferase.